A 689-amino-acid chain; its full sequence is Bifunctional protein GAL10 (689 aa).

Residues 1–345 (MSYILVTGGA…TTKNPFGFQI (345 aa)) are galactowaldenase. NAD(+) is bound at residue 3-34 (YILVTGGAGYIGSHTVVELVNNGYNVVVVDNL). The mutarotase stretch occupies residues 346–689 (NNYSWTKFDS…SYTIYRFENF (344 aa)). H534 acts as the For mutarotase activity in catalysis.

In the N-terminal section; belongs to the NAD(P)-dependent epimerase/dehydratase family. The protein in the C-terminal section; belongs to the aldose epimerase family. The cofactor is NAD(+).

It carries out the reaction UDP-alpha-D-glucose = UDP-alpha-D-galactose. It catalyses the reaction alpha-D-glucose = beta-D-glucose. It participates in carbohydrate metabolism; galactose metabolism. The protein operates within carbohydrate metabolism; hexose metabolism. Mutarotase converts alpha-aldose to the beta-anomer. It is active on D-glucose, L-arabinose, D-xylose, D-galactose, maltose and lactose. This is Bifunctional protein GAL10 (GAL10) from Pachysolen tannophilus (Yeast).